Reading from the N-terminus, the 378-residue chain is Probable serine/threonine-protein kinase PBL7 (378 aa).

The segment at 1-49 (MGWIPCSGKSSGRNKTRRNGDHKLDRKSSDCSVSTSEKSRAKSSLSESK) is disordered. The N-myristoyl glycine moiety is linked to residue G2. The span at 18–29 (RNGDHKLDRKSS) shows a compositional bias: basic and acidic residues. Positions 32–47 (SVSTSEKSRAKSSLSE) are enriched in low complexity. T62 carries the phosphothreonine modification. One can recognise a Protein kinase domain in the interval 73–350 (FRKECLIGEG…ADVVTALSYL (278 aa)). ATP-binding positions include 79–87 (IGEGGFGRV) and K102. Phosphotyrosine is present on Y147. D200 acts as the Proton acceptor in catalysis. Phosphoserine occurs at positions 204 and 234. Phosphothreonine is present on residues T235 and T240. At Y248 the chain carries Phosphotyrosine.

Belongs to the protein kinase superfamily. Ser/Thr protein kinase family. As to quaternary structure, interacts with BSU1 and BSL1. In terms of processing, phosphorylated at Ser-43, Ser-46 and Ser-234. Widely expressed.

The protein localises to the cell membrane. It catalyses the reaction L-seryl-[protein] + ATP = O-phospho-L-seryl-[protein] + ADP + H(+). The catalysed reaction is L-threonyl-[protein] + ATP = O-phospho-L-threonyl-[protein] + ADP + H(+). Serine/threonine-protein kinase involved in the positive regulation of brassinosteroid (BR) signaling and plant growth. Phosphorylates both BSU1 and BSL1 in vitro. The sequence is that of Probable serine/threonine-protein kinase PBL7 from Arabidopsis thaliana (Mouse-ear cress).